The primary structure comprises 99 residues: Aspartyl/glutamyl-tRNA(Asn/Gln) amidotransferase subunit C (99 aa).

It belongs to the GatC family. As to quaternary structure, heterotrimer of A, B and C subunits.

The catalysed reaction is L-glutamyl-tRNA(Gln) + L-glutamine + ATP + H2O = L-glutaminyl-tRNA(Gln) + L-glutamate + ADP + phosphate + H(+). It catalyses the reaction L-aspartyl-tRNA(Asn) + L-glutamine + ATP + H2O = L-asparaginyl-tRNA(Asn) + L-glutamate + ADP + phosphate + 2 H(+). Functionally, allows the formation of correctly charged Asn-tRNA(Asn) or Gln-tRNA(Gln) through the transamidation of misacylated Asp-tRNA(Asn) or Glu-tRNA(Gln) in organisms which lack either or both of asparaginyl-tRNA or glutaminyl-tRNA synthetases. The reaction takes place in the presence of glutamine and ATP through an activated phospho-Asp-tRNA(Asn) or phospho-Glu-tRNA(Gln). The polypeptide is Aspartyl/glutamyl-tRNA(Asn/Gln) amidotransferase subunit C (Paracidovorax citrulli (strain AAC00-1) (Acidovorax citrulli)).